The sequence spans 262 residues: Acyl-[acyl-carrier-protein]--UDP-N-acetylglucosamine O-acyltransferase (262 aa).

Belongs to the transferase hexapeptide repeat family. LpxA subfamily. In terms of assembly, homotrimer.

The protein localises to the cytoplasm. It carries out the reaction a (3R)-hydroxyacyl-[ACP] + UDP-N-acetyl-alpha-D-glucosamine = a UDP-3-O-[(3R)-3-hydroxyacyl]-N-acetyl-alpha-D-glucosamine + holo-[ACP]. It functions in the pathway glycolipid biosynthesis; lipid IV(A) biosynthesis; lipid IV(A) from (3R)-3-hydroxytetradecanoyl-[acyl-carrier-protein] and UDP-N-acetyl-alpha-D-glucosamine: step 1/6. Functionally, involved in the biosynthesis of lipid A, a phosphorylated glycolipid that anchors the lipopolysaccharide to the outer membrane of the cell. The sequence is that of Acyl-[acyl-carrier-protein]--UDP-N-acetylglucosamine O-acyltransferase from Photorhabdus laumondii subsp. laumondii (strain DSM 15139 / CIP 105565 / TT01) (Photorhabdus luminescens subsp. laumondii).